The following is a 103-amino-acid chain: Endoribonuclease MazF3 (103 aa).

This sequence belongs to the PemK/MazF family. In terms of assembly, forms a complex with cognate antitoxin MazE3.

Toxic component of a type II toxin-antitoxin (TA) system. Acts as an endoribonuclease, cleaving in U-rich regions. Neutralized by cognate antitoxin MazE3. This Mycobacterium tuberculosis (strain CDC 1551 / Oshkosh) protein is Endoribonuclease MazF3 (mazF3).